We begin with the raw amino-acid sequence, 194 residues long: Protein A43 (194 aa).

An N-terminal signal peptide occupies residues 1–22 (MMMMKWIISILTMSIMPVLAYS). Over 23–165 (SSIFRFHSED…YKDINDKYND (143 aa)) the chain is Extracellular. Asn65 and Asn114 each carry an N-linked (GlcNAc...) asparagine; by host glycan. A helical membrane pass occupies residues 166-186 (IYDFTAICMLIASTLIVTIYV). Residues 187-194 (FKKIKMNS) are Cytoplasmic-facing.

The protein belongs to the orthopoxvirus OPG172 protein family.

The protein localises to the host membrane. It localises to the host cell surface. The chain is Protein A43 (OPG172) from Homo sapiens (Human).